We begin with the raw amino-acid sequence, 297 residues long: N-acetylneuraminate lyase (297 aa).

The aceneuramate site is built by S47 and T48. The active-site Proton donor is Y137. The active-site Schiff-base intermediate with substrate is the K165. 5 residues coordinate aceneuramate: T167, G189, D191, E192, and S208.

The protein belongs to the DapA family. NanA subfamily. As to quaternary structure, homotetramer.

The protein localises to the cytoplasm. The catalysed reaction is aceneuramate = aldehydo-N-acetyl-D-mannosamine + pyruvate. It participates in amino-sugar metabolism; N-acetylneuraminate degradation; D-fructose 6-phosphate from N-acetylneuraminate: step 1/5. Catalyzes the reversible aldol cleavage of N-acetylneuraminic acid (sialic acid; Neu5Ac) to form pyruvate and N-acetylmannosamine (ManNAc) via a Schiff base intermediate. This Salmonella choleraesuis (strain SC-B67) protein is N-acetylneuraminate lyase.